The sequence spans 301 residues: Ribosomal protein L11 methyltransferase (301 aa).

Residues threonine 146, glycine 167, aspartate 189, and asparagine 234 each coordinate S-adenosyl-L-methionine.

This sequence belongs to the methyltransferase superfamily. PrmA family.

It is found in the cytoplasm. It carries out the reaction L-lysyl-[protein] + 3 S-adenosyl-L-methionine = N(6),N(6),N(6)-trimethyl-L-lysyl-[protein] + 3 S-adenosyl-L-homocysteine + 3 H(+). In terms of biological role, methylates ribosomal protein L11. In Acinetobacter baumannii (strain SDF), this protein is Ribosomal protein L11 methyltransferase.